The following is a 251-amino-acid chain: MKILLSNDDGYKAPGIQALWHCLKELNLHSELRLIAPDRNRSAASNSLTLMEPLRITDHGDAIYSVNGTPTDCVHLGINGAMDFQPDMVVSGINAGANMGDDVLYSGTVAAATEGRFLGKPSIAISLCGDQHFETASQVMLELFKNFHELPLDSSTILNINVPDIPYESLKGIQITRLGKRHCSEKVVTTQDPRGNQIYWVGPAGQAEDASEGTDFHAVENGYASVTPLKIDLTHYEMQAVLKGWFENKAL.

A divalent metal cation-binding residues include Asp-8, Asp-9, Ser-42, and Asn-94.

The protein belongs to the SurE nucleotidase family. Requires a divalent metal cation as cofactor.

Its subcellular location is the cytoplasm. It carries out the reaction a ribonucleoside 5'-phosphate + H2O = a ribonucleoside + phosphate. Its function is as follows. Nucleotidase that shows phosphatase activity on nucleoside 5'-monophosphates. The sequence is that of 5'-nucleotidase SurE from Hydrogenovibrio crunogenus (strain DSM 25203 / XCL-2) (Thiomicrospira crunogena).